We begin with the raw amino-acid sequence, 466 residues long: Asparagine--tRNA ligase (466 aa).

This sequence belongs to the class-II aminoacyl-tRNA synthetase family. As to quaternary structure, homodimer.

The protein resides in the cytoplasm. It carries out the reaction tRNA(Asn) + L-asparagine + ATP = L-asparaginyl-tRNA(Asn) + AMP + diphosphate + H(+). The protein is Asparagine--tRNA ligase of Shigella dysenteriae serotype 1 (strain Sd197).